The sequence spans 72 residues: Translation initiation factor IF-1 (72 aa).

The S1-like domain maps to 1–72 (MAKDDVIEVD…DKGRITYRHK (72 aa)).

Belongs to the IF-1 family. In terms of assembly, component of the 30S ribosomal translation pre-initiation complex which assembles on the 30S ribosome in the order IF-2 and IF-3, IF-1 and N-formylmethionyl-tRNA(fMet); mRNA recruitment can occur at any time during PIC assembly.

It is found in the cytoplasm. Its function is as follows. One of the essential components for the initiation of protein synthesis. Stabilizes the binding of IF-2 and IF-3 on the 30S subunit to which N-formylmethionyl-tRNA(fMet) subsequently binds. Helps modulate mRNA selection, yielding the 30S pre-initiation complex (PIC). Upon addition of the 50S ribosomal subunit IF-1, IF-2 and IF-3 are released leaving the mature 70S translation initiation complex. This is Translation initiation factor IF-1 from Helicobacter hepaticus (strain ATCC 51449 / 3B1).